An 86-amino-acid chain; its full sequence is Small ribosomal subunit protein uS17 (86 aa).

Belongs to the universal ribosomal protein uS17 family. Part of the 30S ribosomal subunit.

Functionally, one of the primary rRNA binding proteins, it binds specifically to the 5'-end of 16S ribosomal RNA. This is Small ribosomal subunit protein uS17 from Rhizorhabdus wittichii (strain DSM 6014 / CCUG 31198 / JCM 15750 / NBRC 105917 / EY 4224 / RW1) (Sphingomonas wittichii).